The following is a 120-amino-acid chain: GATA transcription factor 23 (120 aa).

The segment at 22-76 adopts a GATA-type zinc-finger fold; that stretch reads KGTIRCCSECKTTKTPMWRGGPTGPKSLCNACGIRHRKQRRSELLGIHIIRSHKS.

This sequence belongs to the type IV zinc-finger family. Class B subfamily.

Its subcellular location is the nucleus. Transcriptional regulator that specifically binds 5'-GATA-3' or 5'-GAT-3' motifs within gene promoters. This is GATA transcription factor 23 (GATA23) from Arabidopsis thaliana (Mouse-ear cress).